Consider the following 230-residue polypeptide: Ribosomal RNA small subunit methyltransferase G (230 aa).

S-adenosyl-L-methionine-binding positions include glycine 95, phenylalanine 100, glycine 146–glutamate 147, and arginine 159.

This sequence belongs to the methyltransferase superfamily. RNA methyltransferase RsmG family.

The protein resides in the cytoplasm. In terms of biological role, specifically methylates the N7 position of a guanine in 16S rRNA. This chain is Ribosomal RNA small subunit methyltransferase G, found in Parabacteroides distasonis (strain ATCC 8503 / DSM 20701 / CIP 104284 / JCM 5825 / NCTC 11152).